Reading from the N-terminus, the 272-residue chain is MEAQGVAEGAGPGAASGVPHPAALAPAAAPTLAPASVAAAASQFTLLVMQPCAGQDEAAAPGGSVGAGKPVRYLCEGAGDGEEEAGEDEADLLDTSDPPGGGESAASLEDLEDEETHSGGEGSSGGARRRGSGGGSMSKTCTYEGCSETTSQVAKQRKPWMCKKHRNKMYKDKYKKKKSDQALNCGGTASTGSAGNVKLEESADNILSIVKQRTGSFGDRPARPTLLEQVLNQKRLSLLRSPEVVQFLQKQQQLLNQQVLEQRQQQFPGTSM.

Disordered regions lie at residues 1-20 (MEAQ…GVPH), 74-142 (LCEG…KTCT), and 175-195 (KKKK…GSAG). Residues 79 to 94 (GDGEEEAGEDEADLLD) show a composition bias toward acidic residues. Residues 163–178 (KKHRNKMYKDKYKKKK) carry the Nuclear localization signal motif. Residue K198 forms a Glycyl lysine isopeptide (Lys-Gly) (interchain with G-Cter in SUMO2) linkage. The tract at residues 214–270 (TGSFGDRPARPTLLEQVLNQKRLSLLRSPEVVQFLQKQQQLLNQQVLEQRQQQFPGT) is C-terminal domain.

In terms of assembly, the RFX heterotetrameric complex consists of 2 molecules of RFX5 and one each of RFXAP and RFX-B/RFXANK; with each subunit representing a separate complementation group. RFX forms cooperative DNA binding complexes with X2BP and CBF/NF-Y. RFX associates with CIITA to form an active transcriptional complex. Phosphorylated. As to expression, ubiquitous.

Its subcellular location is the nucleus. Part of the RFX complex that binds to the X-box of MHC II promoters. This chain is Regulatory factor X-associated protein (RFXAP), found in Homo sapiens (Human).